A 176-amino-acid polypeptide reads, in one-letter code: Corrinoid adenosyltransferase (176 aa).

ATP contacts are provided by residues 6 to 14 (TRTGDNGTT), lysine 24, 131 to 136 (RRLERI), and asparagine 155.

This sequence belongs to the Cob(I)alamin adenosyltransferase family.

It localises to the cytoplasm. It carries out the reaction 2 cob(II)yrinate a,c diamide + reduced [electron-transfer flavoprotein] + 2 ATP = 2 adenosylcob(III)yrinate a,c-diamide + 2 triphosphate + oxidized [electron-transfer flavoprotein] + 3 H(+). It catalyses the reaction 2 cob(II)alamin + reduced [electron-transfer flavoprotein] + 2 ATP = 2 adenosylcob(III)alamin + 2 triphosphate + oxidized [electron-transfer flavoprotein] + 3 H(+). It functions in the pathway cofactor biosynthesis; adenosylcobalamin biosynthesis; adenosylcobalamin from cob(II)yrinate a,c-diamide: step 2/7. The sequence is that of Corrinoid adenosyltransferase from Citrobacter freundii.